Here is a 717-residue protein sequence, read N- to C-terminus: Translation initiation factor eIF2B subunit epsilon (717 aa).

Residues 1–14 (MAATAAVPGAAAGR) are compositionally biased toward low complexity. The disordered stretch occupies residues 1–37 (MAATAAVPGAAAGRASKRGGGGSGGGGTQGAEEEPPP). Arginine 18 is subject to Omega-N-methylarginine. The segment covering 18–29 (RGGGGSGGGGTQ) has biased composition (gly residues). Position 23 is a phosphoserine (serine 23). Glycyl lysine isopeptide (Lys-Gly) (interchain with G-Cter in ubiquitin) cross-links involve residues lysine 57 and lysine 99. Serine 126 carries the post-translational modification Phosphoserine. Glycyl lysine isopeptide (Lys-Gly) (interchain with G-Cter in ubiquitin) cross-links involve residues lysine 137 and lysine 213. Threonine 318 is modified (phosphothreonine). The disordered stretch occupies residues 442–479 (GSVISLHPPDAEEDEDDGQFSDDSGADQEKEKVKLKGY). Phosphoserine is present on residues serine 446, serine 462, and serine 465. Residues 452 to 467 (AEEDEDDGQFSDDSGA) are compositionally biased toward acidic residues. Lysine 501 participates in a covalent cross-link: Glycyl lysine isopeptide (Lys-Gly) (interchain with G-Cter in ubiquitin). Residues 517–538 (TEEESETESEGSVDPEELDSRA) form a disordered region. Acidic residues predominate over residues 519–533 (EESETESEGSVDPEE). 2 positions are modified to phosphoserine: serine 528 and serine 536. Residues 539–716 (GSPQLDDIRV…REAEEESSED (178 aa)) form the W2 domain. At serine 540 the chain carries Phosphoserine; by DYRK2. Serine 713 carries the phosphoserine modification.

This sequence belongs to the eIF-2B gamma/epsilon subunits family. In terms of assembly, component of the translation initiation factor 2B (eIF2B) complex which is a heterodecamer of two sets of five different subunits: alpha, beta, gamma, delta and epsilon. Subunits alpha, beta and delta comprise a regulatory subcomplex and subunits epsilon and gamma comprise a catalytic subcomplex. Within the complex, the hexameric regulatory complex resides at the center, with the two heterodimeric catalytic subcomplexes bound on opposite sides. Phosphorylated at Ser-540 by DYRK2; this is required for subsequent phosphorylation by GSK3B. Phosphorylated on serine and threonine residues by GSK3B; phosphorylation inhibits its function. In terms of processing, polyubiquitinated, probably by NEDD4.

The protein resides in the cytoplasm. It localises to the cytosol. Activated by the chemical integrated stress response (ISR) inhibitor ISRIB which stimulates guanine nucleotide exchange factor activity for both phosphorylated and unphosphorylated eIF2. Its function is as follows. Acts as a component of the translation initiation factor 2B (eIF2B) complex, which catalyzes the exchange of GDP for GTP on eukaryotic initiation factor 2 (eIF2) gamma subunit. Its guanine nucleotide exchange factor activity is repressed when bound to eIF2 complex phosphorylated on the alpha subunit, thereby limiting the amount of methionyl-initiator methionine tRNA available to the ribosome and consequently global translation is repressed. The protein is Translation initiation factor eIF2B subunit epsilon (Eif2b5) of Mus musculus (Mouse).